A 377-amino-acid chain; its full sequence is E3 ubiquitin-protein ligase rififylin (377 aa).

Residues 55–107 (TGSEPSCKACGVHFASTTRKQTCLDCKKNFCMTCSSQEGNGPRLCLLCLRFRA) form an FYVE-type zinc finger. In terms of domain architecture, SAP 1 spans 115-134 (LMKMKVKDLRDYLSLHDIST). Positions 176 to 249 (LTQPQTSTVP…SVDSEDSFVP (74 aa)) are disordered. The segment covering 190 to 212 (GLPSSPAQVTSVPLAQDQETQQA) has biased composition (polar residues). The segment covering 235–245 (EDETQSVDSED) has biased composition (acidic residues). Residues Ser-240, Ser-243, Ser-246, and Ser-254 each carry the phosphoserine modification. The SAP 2 domain maps to 264–278 (IEGLTVRQLKEILAR). The RING-type zinc-finger motif lies at 330–365 (CKICMDSPIDCVLLECGHMVTCTKCGKRMNECPICR).

In terms of assembly, interacts with CASP8 and CASP10. Interacts with RIPK1 (via protein kinase domain); involved in RIPK1 ubiquitination. Interacts with PRR5L. Interacts (via RING-type zinc finger) with p53/TP53; involved in p53/TP53 ubiquitination. Interacts (via RING-type zinc finger) with MDM2; the interaction stabilizes MDM2. Autoubiquitinated. In terms of processing, palmitoylated. Post-translationally, undergoes caspase-mediated cleavage upon death-receptor activation, by TNFSF10 for instance. May be mediated by the caspases CASP8 and CASP10 in a negative feedback loop. Ubiquitous. Detected in heart, brain, spleen, lung, liver, skeletal muscle, kidney, testis, thymus, whole embryo and embryonic stem cells.

Its subcellular location is the cytoplasm. The protein localises to the cytosol. The protein resides in the cell membrane. It localises to the recycling endosome membrane. It catalyses the reaction S-ubiquitinyl-[E2 ubiquitin-conjugating enzyme]-L-cysteine + [acceptor protein]-L-lysine = [E2 ubiquitin-conjugating enzyme]-L-cysteine + N(6)-ubiquitinyl-[acceptor protein]-L-lysine.. The protein operates within protein modification; protein ubiquitination. Functionally, E3 ubiquitin-protein ligase that regulates several biological processes through the ubiquitin-mediated proteasomal degradation of various target proteins. Mediates 'Lys-48'-linked polyubiquitination of PRR5L and its subsequent proteasomal degradation thereby indirectly regulating cell migration through the mTORC2 complex. Also ubiquitinates the caspases CASP8 and CASP10, promoting their proteasomal degradation, to negatively regulate apoptosis downstream of death domain receptors. Also negatively regulates the tumor necrosis factor-mediated signaling pathway through targeting of RIPK1 to ubiquitin-mediated proteasomal degradation. Negatively regulates p53/TP53 through its direct ubiquitination and targeting to proteasomal degradation. Indirectly, may also negatively regulate p53/TP53 through ubiquitination and degradation of SFN. May also play a role in endocytic recycling. This Mus musculus (Mouse) protein is E3 ubiquitin-protein ligase rififylin.